The following is a 286-amino-acid chain: Phosphatidylserine decarboxylase proenzyme (286 aa).

Active-site charge relay system; for autoendoproteolytic cleavage activity residues include D90, H147, and S252. The active-site Schiff-base intermediate with substrate; via pyruvic acid; for decarboxylase activity is the S252. Residue S252 is modified to Pyruvic acid (Ser); by autocatalysis.

This sequence belongs to the phosphatidylserine decarboxylase family. PSD-B subfamily. Prokaryotic type I sub-subfamily. As to quaternary structure, heterodimer of a large membrane-associated beta subunit and a small pyruvoyl-containing alpha subunit. The cofactor is pyruvate. In terms of processing, is synthesized initially as an inactive proenzyme. Formation of the active enzyme involves a self-maturation process in which the active site pyruvoyl group is generated from an internal serine residue via an autocatalytic post-translational modification. Two non-identical subunits are generated from the proenzyme in this reaction, and the pyruvate is formed at the N-terminus of the alpha chain, which is derived from the carboxyl end of the proenzyme. The autoendoproteolytic cleavage occurs by a canonical serine protease mechanism, in which the side chain hydroxyl group of the serine supplies its oxygen atom to form the C-terminus of the beta chain, while the remainder of the serine residue undergoes an oxidative deamination to produce ammonia and the pyruvoyl prosthetic group on the alpha chain. During this reaction, the Ser that is part of the protease active site of the proenzyme becomes the pyruvoyl prosthetic group, which constitutes an essential element of the active site of the mature decarboxylase.

It localises to the cell membrane. The catalysed reaction is a 1,2-diacyl-sn-glycero-3-phospho-L-serine + H(+) = a 1,2-diacyl-sn-glycero-3-phosphoethanolamine + CO2. It participates in phospholipid metabolism; phosphatidylethanolamine biosynthesis; phosphatidylethanolamine from CDP-diacylglycerol: step 2/2. Its function is as follows. Catalyzes the formation of phosphatidylethanolamine (PtdEtn) from phosphatidylserine (PtdSer). This Azotobacter vinelandii (strain DJ / ATCC BAA-1303) protein is Phosphatidylserine decarboxylase proenzyme.